The following is a 420-amino-acid chain: Methionine aminopeptidase 2 (420 aa).

The tract at residues 1-48 (MSDAIAKDAVNTSSEKEPVSATPELKTSGSPDAAVSSGDKKKKKKKKK) is disordered. Histidine 172 is a substrate binding site. A divalent metal cation contacts are provided by aspartate 192, aspartate 203, and histidine 272. Histidine 280 is a binding site for substrate. Glutamate 305 and glutamate 401 together coordinate a divalent metal cation.

It belongs to the peptidase M24A family. Methionine aminopeptidase eukaryotic type 2 subfamily. Requires Co(2+) as cofactor. Zn(2+) is required as a cofactor. Mn(2+) serves as cofactor. The cofactor is Fe(2+).

Its subcellular location is the cytoplasm. The catalysed reaction is Release of N-terminal amino acids, preferentially methionine, from peptides and arylamides.. Cotranslationally removes the N-terminal methionine from nascent proteins. The N-terminal methionine is often cleaved when the second residue in the primary sequence is small and uncharged (Met-Ala-, Cys, Gly, Pro, Ser, Thr, or Val). This Lachancea thermotolerans (strain ATCC 56472 / CBS 6340 / NRRL Y-8284) (Yeast) protein is Methionine aminopeptidase 2.